The primary structure comprises 369 residues: MMPTELTSLIPGMFDDFSYDSTASTDDYMNLNFSSFFCKKNNVRQFASHFLPPLYWLVFIVGTLGNSLVILVYWYCTRVKTMTDMFLLNLAIADLLFLATLPFWAIAAAGQWMFQTFMCKVVNSMYKMNFYSCVLLIMCISVDRYIAIVQAMKAQVWRQKRLLYSKMVCITIWVMAAVLCTPEILYSQVSGESGIATCTMVYPKDKNAKLKSAVLILKVTLGFFLPFMVMAFCYTIIIHTLVQAKKSSKHKALKVTITVLTVFIMSQFPYNSILVVQAVDAYAMFISNCTISTNIDICFQVTQTIAFFHSCLNPVLYVFVGERFRRDLVKTLKNLGCISQAQWVSFTRREGSLKLSSMLLETTSGALSL.

Residues 1 to 48 lie on the Extracellular side of the membrane; it reads MMPTELTSLIPGMFDDFSYDSTASTDDYMNLNFSSFFCKKNNVRQFAS. N-linked (GlcNAc...) asparagine glycosylation occurs at N32. 2 disulfides stabilise this stretch: C38–C289 and C119–C198. Residues 49 to 74 form a helical membrane-spanning segment; that stretch reads HFLPPLYWLVFIVGTLGNSLVILVYW. Topologically, residues 75 to 85 are cytoplasmic; the sequence is YCTRVKTMTDM. Residues 86–109 traverse the membrane as a helical segment; that stretch reads FLLNLAIADLLFLATLPFWAIAAA. Residues 110–120 are Extracellular-facing; it reads GQWMFQTFMCK. The helical transmembrane segment at 121–150 threads the bilayer; the sequence is VVNSMYKMNFYSCVLLIMCISVDRYIAIVQ. The Cytoplasmic segment spans residues 151–159; sequence AMKAQVWRQ. Residues 160–185 form a helical membrane-spanning segment; that stretch reads KRLLYSKMVCITIWVMAAVLCTPEIL. Over 186 to 208 the chain is Extracellular; it reads YSQVSGESGIATCTMVYPKDKNA. A helical transmembrane segment spans residues 209–243; it reads KLKSAVLILKVTLGFFLPFMVMAFCYTIIIHTLVQ. Topologically, residues 244-248 are cytoplasmic; the sequence is AKKSS. A helical membrane pass occupies residues 249–283; that stretch reads KHKALKVTITVLTVFIMSQFPYNSILVVQAVDAYA. Topologically, residues 284 to 290 are extracellular; sequence MFISNCT. The chain crosses the membrane as a helical span at residues 291–321; that stretch reads ISTNIDICFQVTQTIAFFHSCLNPVLYVFVG. Topologically, residues 322-369 are cytoplasmic; it reads ERFRRDLVKTLKNLGCISQAQWVSFTRREGSLKLSSMLLETTSGALSL.

It belongs to the G-protein coupled receptor 1 family. In terms of tissue distribution, highly expressed in the thymus and low in lymph nodes and spleen.

It localises to the cell membrane. Receptor for chemokine SCYA25/TECK. Subsequently transduces a signal by increasing the intracellular calcium ions level. This chain is C-C chemokine receptor type 9 (Ccr9), found in Mus musculus (Mouse).